The sequence spans 367 residues: Voltage-gated potassium channel subunit beta-2 (367 aa).

Phosphoserine occurs at positions 9, 14, and 20. R28 is modified (asymmetric dimethylarginine; alternate). The residue at position 28 (R28) is an Omega-N-methylarginine; alternate. S31 bears the Phosphoserine mark. NADP(+) is bound by residues T56, W57, Q63, and D85. The active-site Proton donor/acceptor is the Y90. S112 carries the phosphoserine modification. The residue at position 124 (K124) is an N6-acetyllysine. 18 residues coordinate NADP(+): N158, S188, R189, Q214, W243, S244, P245, L246, A247, C248, K254, Y262, R264, G323, S325, Q329, E332, and N333.

This sequence belongs to the shaker potassium channel beta subunit family. As to quaternary structure, homotetramer. Interaction with tetrameric potassium channel alpha subunits gives rise to a heterooctamer. Identified in potassium channel complexes containing KCNA1, KCNA2, KCNA4, KCNA5, KCNA6, KCNAB1, KCNAB2 and KCND3. Interacts (in unphosphorylated form) with MAPRE1. Forms a ternary complex with SQSTM1 and PRKCZ. Phosphorylated by PRKCZ; may be regulated by incorporation in a complex composed of PRKCZ and SQSTM1. In terms of tissue distribution, detected in brain. Detected at basket cell terminals in cerebellum and in the juxtaparanodal region of nodes of Ranvier (at protein level). Strongest expression in brain and eye. Highest levels in brain detected in brainstem and diencephalon. Strong expression also detected in lung and heart. Moderate expression in kidney, T-lymphocytes and skeletal muscle.

The protein localises to the cytoplasm. It is found in the membrane. Its subcellular location is the cell membrane. The protein resides in the cell projection. It localises to the axon. The protein localises to the synapse. It is found in the synaptosome. Its subcellular location is the cytoskeleton. The catalysed reaction is hydroxyacetone + NADP(+) = methylglyoxal + NADPH + H(+). The enzyme catalyses (E)-4-oxonon-2-en-1-ol + NADP(+) = (E)-4-oxonon-2-enal + NADPH + H(+). Its function is as follows. Regulatory subunit of the voltage-gated potassium (Kv) Shaker channel family. Shaker channels are composed of pore-forming and potassium-conducting alpha subunits and of regulatory beta subunits. The beta-2/KCNAB2 subunit promotes potassium channel closure via a mechanism that does not involve physical obstruction of the channel pore. Promotes the inactivation of Kv1.4/KCNA4 and Kv1.5/KCNA5 alpha subunit-containing channels. Displays nicotinamide adenine dinucleotide phosphate (NADPH)-dependent aldoketoreductase activity by catalyzing the NADPH-dependent reduction of a wide range of aldehyde and ketone substrates. Substrate specificity includes methylglyoxal, 9,10-phenanthrenequinone, prostaglandin J2, 4-nitrobenzaldehyde, 4-nitroacetophenone and 4-oxo-trans-2-nonenal (in vitro, no physiological substrate identified yet). The binding of oxidized and reduced nucleotide cofactors alters Kv channel gating and may contribute to dynamic fine tuning of cell excitability. Contributes to the regulation of nerve signaling, and prevents neuronal hyperexcitability. The polypeptide is Voltage-gated potassium channel subunit beta-2 (Mus musculus (Mouse)).